Consider the following 323-residue polypeptide: o-succinylbenzoate synthase (323 aa).

The active-site Proton donor is K134. Positions 162, 191, and 214 each coordinate Mg(2+). The active-site Proton acceptor is the K236.

Belongs to the mandelate racemase/muconate lactonizing enzyme family. MenC type 1 subfamily. A divalent metal cation serves as cofactor.

It catalyses the reaction (1R,6R)-6-hydroxy-2-succinyl-cyclohexa-2,4-diene-1-carboxylate = 2-succinylbenzoate + H2O. It participates in quinol/quinone metabolism; 1,4-dihydroxy-2-naphthoate biosynthesis; 1,4-dihydroxy-2-naphthoate from chorismate: step 4/7. Its pathway is quinol/quinone metabolism; menaquinone biosynthesis. Converts 2-succinyl-6-hydroxy-2,4-cyclohexadiene-1-carboxylate (SHCHC) to 2-succinylbenzoate (OSB). The sequence is that of o-succinylbenzoate synthase from Yersinia enterocolitica serotype O:8 / biotype 1B (strain NCTC 13174 / 8081).